The following is a 324-amino-acid chain: Acetyl-coenzyme A carboxylase carboxyl transferase subunit alpha (324 aa).

Residues 37 to 291 enclose the CoA carboxyltransferase C-terminal domain; it reads KLEKRLDKLK…REFIIQEWLR (255 aa).

The protein belongs to the AccA family. As to quaternary structure, acetyl-CoA carboxylase is a heterohexamer composed of biotin carboxyl carrier protein (AccB), biotin carboxylase (AccC) and two subunits each of ACCase subunit alpha (AccA) and ACCase subunit beta (AccD).

It is found in the cytoplasm. It carries out the reaction N(6)-carboxybiotinyl-L-lysyl-[protein] + acetyl-CoA = N(6)-biotinyl-L-lysyl-[protein] + malonyl-CoA. It functions in the pathway lipid metabolism; malonyl-CoA biosynthesis; malonyl-CoA from acetyl-CoA: step 1/1. In terms of biological role, component of the acetyl coenzyme A carboxylase (ACC) complex. First, biotin carboxylase catalyzes the carboxylation of biotin on its carrier protein (BCCP) and then the CO(2) group is transferred by the carboxyltransferase to acetyl-CoA to form malonyl-CoA. This is Acetyl-coenzyme A carboxylase carboxyl transferase subunit alpha from Chlamydia pneumoniae (Chlamydophila pneumoniae).